The following is a 197-amino-acid chain: 3-isopropylmalate dehydratase small subunit (197 aa).

This sequence belongs to the LeuD family. LeuD type 1 subfamily. Heterodimer of LeuC and LeuD.

The enzyme catalyses (2R,3S)-3-isopropylmalate = (2S)-2-isopropylmalate. Its pathway is amino-acid biosynthesis; L-leucine biosynthesis; L-leucine from 3-methyl-2-oxobutanoate: step 2/4. In terms of biological role, catalyzes the isomerization between 2-isopropylmalate and 3-isopropylmalate, via the formation of 2-isopropylmaleate. The sequence is that of 3-isopropylmalate dehydratase small subunit from Corynebacterium glutamicum (strain ATCC 13032 / DSM 20300 / JCM 1318 / BCRC 11384 / CCUG 27702 / LMG 3730 / NBRC 12168 / NCIMB 10025 / NRRL B-2784 / 534).